Consider the following 112-residue polypeptide: Thioredoxin-like protein YdfQ (112 aa).

A Thioredoxin domain is found at 1–107 (MKEMTGLHSL…LEQKLKRVYR (107 aa)). Cysteines 32 and 35 form a disulfide.

This chain is Thioredoxin-like protein YdfQ (ydfQ), found in Bacillus subtilis (strain 168).